Reading from the N-terminus, the 364-residue chain is tRNA 2-selenouridine synthase (364 aa).

The 124-residue stretch at 14–137 folds into the Rhodanese domain; the sequence is LIADTPIIDV…LRQTTIQATI (124 aa). C97 acts as the S-selanylcysteine intermediate in catalysis.

This sequence belongs to the SelU family. As to quaternary structure, monomer.

It carries out the reaction 5-methylaminomethyl-2-thiouridine(34) in tRNA + selenophosphate + (2E)-geranyl diphosphate + H2O + H(+) = 5-methylaminomethyl-2-selenouridine(34) in tRNA + (2E)-thiogeraniol + phosphate + diphosphate. The catalysed reaction is 5-methylaminomethyl-2-thiouridine(34) in tRNA + (2E)-geranyl diphosphate = 5-methylaminomethyl-S-(2E)-geranyl-thiouridine(34) in tRNA + diphosphate. The enzyme catalyses 5-methylaminomethyl-S-(2E)-geranyl-thiouridine(34) in tRNA + selenophosphate + H(+) = 5-methylaminomethyl-2-(Se-phospho)selenouridine(34) in tRNA + (2E)-thiogeraniol. It catalyses the reaction 5-methylaminomethyl-2-(Se-phospho)selenouridine(34) in tRNA + H2O = 5-methylaminomethyl-2-selenouridine(34) in tRNA + phosphate. In terms of biological role, involved in the post-transcriptional modification of the uridine at the wobble position (U34) of tRNA(Lys), tRNA(Glu) and tRNA(Gln). Catalyzes the conversion of 2-thiouridine (S2U-RNA) to 2-selenouridine (Se2U-RNA). Acts in a two-step process involving geranylation of 2-thiouridine (S2U) to S-geranyl-2-thiouridine (geS2U) and subsequent selenation of the latter derivative to 2-selenouridine (Se2U) in the tRNA chain. The protein is tRNA 2-selenouridine synthase of Escherichia coli O8 (strain IAI1).